Here is a 281-residue protein sequence, read N- to C-terminus: Putative pyruvate, phosphate dikinase regulatory protein (281 aa).

Residue 150 to 157 (GVSRTSKT) coordinates ADP.

The protein belongs to the pyruvate, phosphate/water dikinase regulatory protein family. PDRP subfamily.

It catalyses the reaction N(tele)-phospho-L-histidyl/L-threonyl-[pyruvate, phosphate dikinase] + ADP = N(tele)-phospho-L-histidyl/O-phospho-L-threonyl-[pyruvate, phosphate dikinase] + AMP + H(+). The catalysed reaction is N(tele)-phospho-L-histidyl/O-phospho-L-threonyl-[pyruvate, phosphate dikinase] + phosphate + H(+) = N(tele)-phospho-L-histidyl/L-threonyl-[pyruvate, phosphate dikinase] + diphosphate. Functionally, bifunctional serine/threonine kinase and phosphorylase involved in the regulation of the pyruvate, phosphate dikinase (PPDK) by catalyzing its phosphorylation/dephosphorylation. The chain is Putative pyruvate, phosphate dikinase regulatory protein from Sorangium cellulosum (strain So ce56) (Polyangium cellulosum (strain So ce56)).